The sequence spans 411 residues: MSDSVILALGIAAFTVIVLVLVAIILFAKSKLVDSGDITIDINDDPEKAITLPAGGKLLGALASKGIFVSSACGGGGSCGQCIVKVKNGGGEILPTELSHINKREAKEGYRLACQVNVKGNMEVELPEEIFGVKKWECTVISNDNKATFIKELKLAIPEGEEVPFRAGGYIQIEAEPHVVNYKDFDIPEEYHEDWDKYDLWRYVSKVDEHIIRAYSMASYPEEKGIIMLNVRIATPPPRQPDAPPGQMSSYIWSLKAGDKVTISGPFGEFFAKETDAEMVFIGGGAGMAPMRSHIFDQLKRLHSKRKMSFWYGARSKREIFYQEDFDQLQAENPNFVWHVALSDALPEDNWTGYTGFIHNVLYENYLKNHEAPEDCEYYMCGPPVMNAAVIKMLKDLGVEDENILLDDFGG.

Residues 5–25 form a helical membrane-spanning segment; that stretch reads VILALGIAAFTVIVLVLVAII. A 2Fe-2S ferredoxin-type domain is found at 36-130; it reads GDITIDINDD…NMEVELPEEI (95 aa). [2Fe-2S] cluster-binding residues include C73, C79, C82, and C114. Residues 133–273 enclose the FAD-binding FR-type domain; the sequence is VKKWECTVIS…SGPFGEFFAK (141 aa). Residues 276 to 393 are catalytic; that stretch reads DAEMVFIGGG…PVMNAAVIKM (118 aa).

This sequence belongs to the NqrF family. As to quaternary structure, composed of six subunits; NqrA, NqrB, NqrC, NqrD, NqrE and NqrF. Requires [2Fe-2S] cluster as cofactor. The cofactor is FAD.

The protein resides in the cell inner membrane. The enzyme catalyses a ubiquinone + n Na(+)(in) + NADH + H(+) = a ubiquinol + n Na(+)(out) + NAD(+). NQR complex catalyzes the reduction of ubiquinone-1 to ubiquinol by two successive reactions, coupled with the transport of Na(+) ions from the cytoplasm to the periplasm. The first step is catalyzed by NqrF, which accepts electrons from NADH and reduces ubiquinone-1 to ubisemiquinone by a one-electron transfer pathway. The protein is Na(+)-translocating NADH-quinone reductase subunit F of Haemophilus influenzae (strain ATCC 51907 / DSM 11121 / KW20 / Rd).